We begin with the raw amino-acid sequence, 738 residues long: Multifunctional procollagen lysine hydroxylase and glycosyltransferase LH3 (738 aa).

The first 24 residues, Met-1 to Ala-24, serve as a signal peptide directing secretion. The required for glycosyltransferase activity stretch occupies residues Ser-25–Pro-290. Residue Val-44–Thr-46 participates in UDP binding. N-linked (GlcNAc...) asparagine glycosylation is present at Asn-63. Residues Asp-112, Asp-115, and His-253 each contribute to the Mn(2+) site. Asp-112 to Tyr-114 is a binding site for UDP. Residue Gly-256–Lys-259 participates in UDP binding. Disulfide bonds link Cys-279/Cys-282 and Cys-379/Cys-385. Residues Pro-295–Arg-520 form an accessory region region. Residue Asn-548 is glycosylated (N-linked (GlcNAc...) asparagine). A disulfide bridge links Cys-563 with Cys-698. 2 residues coordinate 2-oxoglutarate: Arg-599 and Tyr-656. The 92-residue stretch at Arg-647–Pro-738 folds into the Fe2OG dioxygenase domain. The Fe cation site is built by His-667 and Asp-669. Positions Thr-672–Leu-715 are important for dimerization. Asn-676 contributes to the 2-oxoglutarate binding site. Position 719 (His-719) interacts with Fe cation. Arg-729 lines the 2-oxoglutarate pocket.

As to quaternary structure, homodimer. It depends on Fe(2+) as a cofactor. L-ascorbate serves as cofactor. The cofactor is Mn(2+).

It is found in the rough endoplasmic reticulum. The protein localises to the endoplasmic reticulum lumen. Its subcellular location is the endoplasmic reticulum membrane. It localises to the secreted. The protein resides in the extracellular space. It carries out the reaction L-lysyl-[collagen] + 2-oxoglutarate + O2 = (5R)-5-hydroxy-L-lysyl-[collagen] + succinate + CO2. The enzyme catalyses (5R)-5-hydroxy-L-lysyl-[collagen] + UDP-alpha-D-galactose = (5R)-5-O-(beta-D-galactosyl)-5-hydroxy-L-lysyl-[collagen] + UDP + H(+). It catalyses the reaction (5R)-5-O-(beta-D-galactosyl)-5-hydroxy-L-lysyl-[collagen] + UDP-alpha-D-glucose = (5R)-5-O-[alpha-D-glucosyl-(1-&gt;2)-beta-D-galactosyl]-5-hydroxy-L-lysyl-[collagen] + UDP + H(+). Multifunctional enzyme that catalyzes a series of post-translational modifications on Lys residues in procollagen. Plays a redundant role in catalyzing the formation of hydroxylysine residues in -Xaa-Lys-Gly- sequences in collagens. Plays a redundant role in catalyzing the transfer of galactose onto hydroxylysine groups, giving rise to galactosyl 5-hydroxylysine. Has an essential role by catalyzing the subsequent transfer of glucose moieties, giving rise to 1,2-glucosylgalactosyl-5-hydroxylysine residues. Catalyzes hydroxylation and glycosylation of Lys residues in the MBL1 collagen-like domain, giving rise to hydroxylysine and 1,2-glucosylgalactosyl-5-hydroxylysine residues. Catalyzes hydroxylation and glycosylation of Lys residues in the ADIPOQ collagen-like domain, giving rise to hydroxylysine and 1,2-glucosylgalactosyl-5-hydroxylysine residues. Essential for normal biosynthesis and secretion of type IV collagens. Essential for normal formation of basement membranes. The polypeptide is Multifunctional procollagen lysine hydroxylase and glycosyltransferase LH3 (PLOD3) (Pongo abelii (Sumatran orangutan)).